Reading from the N-terminus, the 301-residue chain is Glycine--tRNA ligase alpha subunit (301 aa).

This sequence belongs to the class-II aminoacyl-tRNA synthetase family. Tetramer of two alpha and two beta subunits.

Its subcellular location is the cytoplasm. The catalysed reaction is tRNA(Gly) + glycine + ATP = glycyl-tRNA(Gly) + AMP + diphosphate. The protein is Glycine--tRNA ligase alpha subunit of Shewanella oneidensis (strain ATCC 700550 / JCM 31522 / CIP 106686 / LMG 19005 / NCIMB 14063 / MR-1).